We begin with the raw amino-acid sequence, 73 residues long: Putative membrane protein insertion efficiency factor (73 aa).

It belongs to the UPF0161 family.

The protein resides in the cell inner membrane. Its function is as follows. Could be involved in insertion of integral membrane proteins into the membrane. The sequence is that of Putative membrane protein insertion efficiency factor from Jannaschia sp. (strain CCS1).